Reading from the N-terminus, the 367-residue chain is Inositol-3-phosphate synthase (367 aa).

The residue at position 2 (Ser2) is an N-acetylserine. Lys73 is covalently cross-linked (Isoglutamyl lysine isopeptide (Lys-Gln) (interchain with Q-Cter in protein Pup)). The NAD(+) site is built by Asp78, Ala137, Tyr157, Ser200, Asp235, and Lys248.

It belongs to the myo-inositol 1-phosphate synthase family. Requires NAD(+) as cofactor. Pupylated at Lys-73 by the prokaryotic ubiquitin-like protein Pup, which leads to its degradation by the proteasome.

It carries out the reaction D-glucose 6-phosphate = 1D-myo-inositol 3-phosphate. Its function is as follows. Key enzyme in myo-inositol biosynthesis pathway that catalyzes the conversion of glucose 6-phosphate to 1D-myo-inositol 3-phosphate in a NAD-dependent manner. This chain is Inositol-3-phosphate synthase (ino1), found in Mycobacterium tuberculosis (strain ATCC 25618 / H37Rv).